The chain runs to 207 residues: Thiamine-phosphate synthase (207 aa).

4-amino-2-methyl-5-(diphosphooxymethyl)pyrimidine is bound by residues 35–39 and N67; that span reads QYRDK. D68 and D86 together coordinate Mg(2+). Position 105 (T105) interacts with 4-amino-2-methyl-5-(diphosphooxymethyl)pyrimidine. Position 132–134 (132–134) interacts with 2-[(2R,5Z)-2-carboxy-4-methylthiazol-5(2H)-ylidene]ethyl phosphate; the sequence is SVT. K135 serves as a coordination point for 4-amino-2-methyl-5-(diphosphooxymethyl)pyrimidine. 2-[(2R,5Z)-2-carboxy-4-methylthiazol-5(2H)-ylidene]ethyl phosphate is bound at residue G162.

It belongs to the thiamine-phosphate synthase family. Mg(2+) is required as a cofactor.

The catalysed reaction is 2-[(2R,5Z)-2-carboxy-4-methylthiazol-5(2H)-ylidene]ethyl phosphate + 4-amino-2-methyl-5-(diphosphooxymethyl)pyrimidine + 2 H(+) = thiamine phosphate + CO2 + diphosphate. It carries out the reaction 2-(2-carboxy-4-methylthiazol-5-yl)ethyl phosphate + 4-amino-2-methyl-5-(diphosphooxymethyl)pyrimidine + 2 H(+) = thiamine phosphate + CO2 + diphosphate. The enzyme catalyses 4-methyl-5-(2-phosphooxyethyl)-thiazole + 4-amino-2-methyl-5-(diphosphooxymethyl)pyrimidine + H(+) = thiamine phosphate + diphosphate. The protein operates within cofactor biosynthesis; thiamine diphosphate biosynthesis; thiamine phosphate from 4-amino-2-methyl-5-diphosphomethylpyrimidine and 4-methyl-5-(2-phosphoethyl)-thiazole: step 1/1. Its function is as follows. Condenses 4-methyl-5-(beta-hydroxyethyl)thiazole monophosphate (THZ-P) and 2-methyl-4-amino-5-hydroxymethyl pyrimidine pyrophosphate (HMP-PP) to form thiamine monophosphate (TMP). The sequence is that of Thiamine-phosphate synthase from Pseudomonas putida (strain W619).